Here is a 383-residue protein sequence, read N- to C-terminus: GTP-binding protein 10 homolog (383 aa).

One can recognise an Obg domain in the interval Pro22 to Ile157. Positions Ala158–Val353 constitute an OBG-type G domain. GTP-binding positions include Gly164–Ser171, Asp211–Leu215, and Asn287–Asp290.

It belongs to the TRAFAC class OBG-HflX-like GTPase superfamily. OBG GTPase family.

The protein localises to the nucleus. Its subcellular location is the nucleolus. May be involved in the ribosome maturation process. The chain is GTP-binding protein 10 homolog from Drosophila pseudoobscura pseudoobscura (Fruit fly).